Consider the following 103-residue polypeptide: UPF0134 protein MPN_484 (103 aa).

Belongs to the UPF0134 family.

This is UPF0134 protein MPN_484 from Mycoplasma pneumoniae (strain ATCC 29342 / M129 / Subtype 1) (Mycoplasmoides pneumoniae).